A 67-amino-acid polypeptide reads, in one-letter code: Protein AaeX (67 aa).

A run of 2 helical transmembrane segments spans residues 3-23 (LFPV…ELLL) and 43-63 (FVWH…YLLS).

This sequence belongs to the AaeX family.

The protein resides in the cell membrane. In Cronobacter sakazakii (strain ATCC BAA-894) (Enterobacter sakazakii), this protein is Protein AaeX.